Here is a 180-residue protein sequence, read N- to C-terminus: MDQRRNNSKPIKNQDPINAFIRAREVLIIGDNGEKLGPLKRNEAIQLAEEKGLDLMQVGQQPDGLAICKILDYGKFRYQQQKKNKEAKKNQVKVENKEIRLTVNIGQHDLVTKAKKAREFLEAGDRVKISLKFKGREIAYMDLGKETLDRFYKEIEDIAKIEKEAKLTSRFLDMYVVPKK.

Belongs to the IF-3 family. Monomer.

The protein resides in the cytoplasm. Functionally, IF-3 binds to the 30S ribosomal subunit and shifts the equilibrium between 70S ribosomes and their 50S and 30S subunits in favor of the free subunits, thus enhancing the availability of 30S subunits on which protein synthesis initiation begins. The polypeptide is Translation initiation factor IF-3 (Mesoplasma florum (strain ATCC 33453 / NBRC 100688 / NCTC 11704 / L1) (Acholeplasma florum)).